The chain runs to 101 residues: Protein S100-A3 (101 aa).

EF-hand domains lie at I12–P47 and F50–Y85. K26 provides a ligand contact to Ca(2+). C30 and C68 form a disulfide bridge. R51 is modified (citrulline; by PAD3). Positions 63, 65, 67, 69, and 74 each coordinate Ca(2+). C83, C86, H87, and C93 together coordinate Zn(2+).

It belongs to the S-100 family. As to quaternary structure, homodimer and homotetramer for the citrullinated form. More than half of the arginine residues undergo citrullination by PAD1 and PAD2. Arg-51 is specifically citrullinated by PAD3 and promotes tetramerization. In terms of tissue distribution, skin specific, specifically expressed in cuticle of pelage follicle.

It localises to the cytoplasm. Binds both calcium and zinc. May be involved in calcium-dependent cuticle cell differentiation, hair shaft and hair cuticular barrier formation. The polypeptide is Protein S100-A3 (S100a3) (Mus musculus (Mouse)).